Consider the following 311-residue polypeptide: Triacylglycerol lipase (311 aa).

Residues 1–26 (MKKKSLLPLGLAIGLASLAASPLIQA) form the signal peptide. Residues 35 to 280 (PIVLAHGMLG…DNYRMNHLDE (246 aa)) form the AB hydrolase-1 domain. Position 42 (Met-42) interacts with substrate. Catalysis depends on Ser-108, which acts as the Nucleophile. Substrate is bound at residue His-109. Residues Cys-209 and Cys-261 are joined by a disulfide bond. A Ca(2+)-binding site is contributed by Asp-235. Catalysis depends on charge relay system residues Asp-255 and His-277. Residues Asp-279, Gln-283, and Leu-287 each contribute to the Ca(2+) site.

This sequence belongs to the AB hydrolase superfamily. Pseudomonas lipase family. Monomer. The cofactor is Ca(2+).

The protein resides in the secreted. The catalysed reaction is a triacylglycerol + H2O = a diacylglycerol + a fatty acid + H(+). Its activity is regulated as follows. Na(+) increases lipase activity. Inhibited by diethyl p-nitrophenyl phosphate and 3,4-dichloroisocoumarin (DCI). Functionally, catalyzes the hydrolysis of triacylglycerol. It also exhibits some esterase activity with p-nitrophenyl acetate and Tween 80 as substrates, however the lipase activity is approximately eight times the esterase activity. It shows a marked specificity for the 1,3-oleyl residues of triolein. This is Triacylglycerol lipase from Pseudomonas aeruginosa (strain ATCC 15692 / DSM 22644 / CIP 104116 / JCM 14847 / LMG 12228 / 1C / PRS 101 / PAO1).